The sequence spans 346 residues: Methylthioribose-1-phosphate isomerase (346 aa).

Residues 48–50 (RGA), Arg91, and Gln200 contribute to the substrate site. The Proton donor role is filled by Asp241. 251–252 (NK) lines the substrate pocket.

The protein belongs to the eIF-2B alpha/beta/delta subunits family. MtnA subfamily.

The catalysed reaction is 5-(methylsulfanyl)-alpha-D-ribose 1-phosphate = 5-(methylsulfanyl)-D-ribulose 1-phosphate. It participates in amino-acid biosynthesis; L-methionine biosynthesis via salvage pathway; L-methionine from S-methyl-5-thio-alpha-D-ribose 1-phosphate: step 1/6. In terms of biological role, catalyzes the interconversion of methylthioribose-1-phosphate (MTR-1-P) into methylthioribulose-1-phosphate (MTRu-1-P). This is Methylthioribose-1-phosphate isomerase from Picosynechococcus sp. (strain ATCC 27264 / PCC 7002 / PR-6) (Agmenellum quadruplicatum).